A 568-amino-acid chain; its full sequence is Dual specificity tyrosine-phosphorylation-regulated kinase 3 (568 aa).

The disordered stretch occupies residues 1 to 168 (MKWKEKLGDG…HGVIGGPNNG (168 aa)). Residues 77 to 114 (SNTVQSDGISDSEKCSPTVSQGKSSDCLNTVKSNSSSK) show a composition bias toward polar residues. One can recognise a Protein kinase domain in the interval 189–502 (YEVLKIIGKG…PAQALRHPWI (314 aa)). ATP is bound by residues 195 to 203 (IGKGSFGQV) and lysine 218. Catalysis depends on aspartate 315, which acts as the Proton acceptor. A Phosphoserine modification is found at serine 330. A Phosphotyrosine modification is found at tyrosine 349. The short motif at 448-461 (RSRRGKKRGPPGSK) is the Nuclear localization signal element.

This sequence belongs to the protein kinase superfamily. CMGC Ser/Thr protein kinase family. MNB/DYRK subfamily. As to quaternary structure, interacts with SIRT1. The cofactor is Mg(2+). Post-translationally, protein kinase activity is activated following autophosphorylation at Tyr-349. Autophosphorylation at Ser-330 stabilizes the protein and enhances the protein kinase activity. Ubiquitinated at anaphase by the anaphase-promoting complex (APC/C), leading to its degradation by the proteasome.

Its subcellular location is the nucleus. The protein resides in the cytoplasm. It localises to the nucleus speckle. The protein localises to the cytoplasmic granule. It is found in the cytoskeleton. Its subcellular location is the microtubule organizing center. The protein resides in the centrosome. The enzyme catalyses L-seryl-[protein] + ATP = O-phospho-L-seryl-[protein] + ADP + H(+). It catalyses the reaction L-threonyl-[protein] + ATP = O-phospho-L-threonyl-[protein] + ADP + H(+). It carries out the reaction L-tyrosyl-[protein] + ATP = O-phospho-L-tyrosyl-[protein] + ADP + H(+). With respect to regulation, protein kinase activity is activated following autophosphorylation at Tyr-349. Dual-specificity protein kinase that promotes disassembly of several types of membraneless organelles during mitosis, such as stress granules, nuclear speckles and pericentriolar material. Dual-specificity tyrosine-regulated kinases (DYRKs) autophosphorylate a critical tyrosine residue in their activation loop and phosphorylate their substrate on serine and threonine residues. Acts as a central dissolvase of membraneless organelles during the G2-to-M transition, after the nuclear-envelope breakdown: acts by mediating phosphorylation of multiple serine and threonine residues in unstructured domains of proteins, such as SRRM1 and PCM1. Does not mediate disassembly of all membraneless organelles: disassembly of P-body and nucleolus is not regulated by DYRK3. Dissolution of membraneless organelles at the onset of mitosis is also required to release mitotic regulators, such as ZNF207, from liquid-unmixed organelles where they are sequestered and keep them dissolved during mitosis. Regulates mTORC1 by mediating the dissolution of stress granules: during stressful conditions, DYRK3 partitions from the cytosol to the stress granule, together with mTORC1 components, which prevents mTORC1 signaling. When stress signals are gone, the kinase activity of DYRK3 is required for the dissolution of stress granule and mTORC1 relocation to the cytosol: acts by mediating the phosphorylation of the mTORC1 inhibitor AKT1S1, allowing full reactivation of mTORC1 signaling. Also acts as a negative regulator of EPO-dependent erythropoiesis: may place an upper limit on red cell production during stress erythropoiesis. Inhibits cell death due to cytokine withdrawal in hematopoietic progenitor cells. Promotes cell survival upon genotoxic stress through phosphorylation of SIRT1: this in turn inhibits p53/TP53 activity and apoptosis. This is Dual specificity tyrosine-phosphorylation-regulated kinase 3 from Macaca fascicularis (Crab-eating macaque).